The primary structure comprises 225 residues: Ras-related protein Rab-21 (225 aa).

A2 bears the N-acetylalanine mark. Residues G28, G31, K32, T33, S34, N45, D46, H48, T50, and T51 each contribute to the GTP site. T33 is a binding site for Mg(2+). A Switch 1 motif is present at residues 43 to 56 (KFNDKHITTLQASF). Residues T51 and D74 each contribute to the Mg(2+) site. Positions 76 to 94 (AGQERFHALGPIYYRDSNG) match the Switch 2 motif. GTP-binding residues include G77, N132, K133, D135, A163, and K164. The interval 188–225 (ERAKGNGSSQPGTARRGVQIIDDEPQAQTSGGGCCSSG) is disordered. 2 S-geranylgeranyl cysteine lipidation sites follow: C221 and C222. A Cysteine methyl ester modification is found at C222. The propeptide at 223 to 225 (SSG) is removed in mature form.

This sequence belongs to the small GTPase superfamily. Rab family. As to quaternary structure, interacts with the cytoplasmic tail of integrins ITGA1, ITGA2, ITGA5, ITGA6, ITGA11 and ITGB1. Interacts with RABGEF1 (via VPS9 domain). Interacts with ANKRD27. Interacts with VAMP7. Interacts (in GTP-bound form) with VAMP8 in response to starvation; the interaction probably regulates VAMP8 endolysosomal trafficking. Interacts (active GTP-bound form) with TMED10; the interaction is indirect and regulates TMED10 abundance and localization at the Golgi. It depends on Mg(2+) as a cofactor. As to expression, widely expressed. In jejunal tissue, predominantly expressed in the apical region of the epithelial cell layer of the villi, weak expression, if any, in the crypt epithelium. Capillary endothelium and some cell types in the lamina propria also show expression.

The protein resides in the endoplasmic reticulum membrane. It localises to the golgi apparatus. The protein localises to the trans-Golgi network. Its subcellular location is the golgi apparatus membrane. It is found in the early endosome membrane. The protein resides in the cytoplasmic vesicle membrane. It localises to the cleavage furrow. The protein localises to the cell projection. Its subcellular location is the neuron projection. It catalyses the reaction GTP + H2O = GDP + phosphate + H(+). Regulated by guanine nucleotide exchange factors (GEFs) including ANKRD27 and RABGEF1, which promote the exchange of bound GDP for free GTP. Regulated by GTPase activating proteins (GAPs) which increase the GTP hydrolysis activity. Inhibited by GDP dissociation inhibitors (GDIs). The small GTPases Rab are key regulators of intracellular membrane trafficking, from the formation of transport vesicles to their fusion with membranes. Rabs cycle between an inactive GDP-bound form and an active GTP-bound form that is able to recruit to membranes different sets of downstream effectors directly responsible for vesicle formation, movement, tethering and fusion. RAB21 is involved in membrane trafficking control. During the mitosis of adherent cells, controls the endosomal trafficking of integrins which is required for the successful completion of cytokinesis. Regulates integrin internalization and recycling, but does not influence the traffic of endosomally translocated receptors in general. As a result, may regulate cell adhesion and migration. Involved in neurite growth. Following SBF2/MTMT13-mediated activation in response to starvation-induced autophagy, binds to and regulates SNARE protein VAMP8 endolysosomal transport required for SNARE-mediated autophagosome-lysosome fusion. Modulates protein levels of the cargo receptors TMED2 and TMED10, and required for appropriate Golgi localization of TMED10. In Homo sapiens (Human), this protein is Ras-related protein Rab-21.